Here is a 225-residue protein sequence, read N- to C-terminus: Insulin-induced gene 2 protein (225 aa).

Over 1–28 (MAEGETESPGPKKCGPYISSVTSQSVNL) the chain is Cytoplasmic. The helical transmembrane segment at 29-51 (MIRGVVLFFIGVFLALVLNLLQI) threads the bilayer. The Lumenal portion of the chain corresponds to 52–70 (QRNVTLFPPDVIASIFSSA). A helical transmembrane segment spans residues 71 to 88 (WWVPPCCGTASAVIGLLY). Over 89–103 (PCIDRHLGEPHKFKR) the chain is Cytoplasmic. Residues 104–126 (EWSSVMRCVAVFVGINHASAKVD) traverse the membrane as a helical segment. At 127-129 (FDN) the chain is on the lumenal side. A helical transmembrane segment spans residues 130–148 (NIQLSLTLAALSIGLWWTF). Topologically, residues 149-153 (DRSRS) are cytoplasmic. Position 151 is a phosphoserine; by PCK1 (Ser-151). The chain crosses the membrane as a helical span at residues 154–175 (GFGLGVGIAFLATVVTQLLVYN). Residues 176–189 (GVYQYTSPDFLYVR) lie on the Lumenal side of the membrane. The chain crosses the membrane as a helical span at residues 190 to 207 (SWLPCIFFAGGITMGNIG). Residues 208-225 (RQLAMYECKVIAEKSHQE) lie on the Cytoplasmic side of the membrane. Cys-215 is subject to Cysteine sulfenic acid (-SOH); alternate. A Glycyl cysteine thioester (Cys-Gly) (interchain with G-Cter in ubiquitin); alternate cross-link involves residue Cys-215. Residues 219 to 225 (AEKSHQE) carry the KxHxx motif.

Belongs to the INSIG family. Interacts with SCAP; interaction is direct and only takes place in the presence of sterols; it prevents interaction between SCAP and the coat protein complex II (COPII). Associates with the SCAP-SREBP complex (composed of SCAP and SREBF1/SREBP1 or SREBF2/SREBP2); association is mediated via its interaction with SCAP and only takes place in the presence of sterols. Interacts with RNF139. Interacts with RNF145. Post-translationally, phosphorylation at Ser-151 by PCK1 reduces binding to oxysterol, disrupting the interaction between INSIG2 and SCAP, thereby promoting nuclear translocation of SREBP proteins (SREBF1/SREBP1 or SREBF2/SREBP2) and subsequent transcription of downstream lipogenesis-related genes. In terms of processing, polyubiquitinated by AMFR/gp78 at Cys-215 in some tissues such as adipose tissues, undifferentiated myoblasts and liver, leading to its degradation. In differentiated myotubes, Cys-215 oxidation prevents ubiquitination at the same site, resulting in protein stabilization. Oxidized at Cys-215 in differentiated myotubes, preventing ubiquitination at the same site, and resulting in protein stabilization.

Its subcellular location is the endoplasmic reticulum membrane. Oxysterol-binding protein that mediates feedback control of cholesterol synthesis by controlling both endoplasmic reticulum to Golgi transport of SCAP and degradation of HMGCR. Acts as a negative regulator of cholesterol biosynthesis by mediating the retention of the SCAP-SREBP complex in the endoplasmic reticulum, thereby blocking the processing of sterol regulatory element-binding proteins (SREBPs) SREBF1/SREBP1 and SREBF2/SREBP2. Binds oxysterol, including 22-hydroxycholesterol, 24-hydroxycholesterol, 25-hydroxycholesterol and 27-hydroxycholesterol, regulating interaction with SCAP and retention of the SCAP-SREBP complex in the endoplasmic reticulum. In presence of oxysterol, interacts with SCAP, retaining the SCAP-SREBP complex in the endoplasmic reticulum, thereby preventing SCAP from escorting SREBF1/SREBP1 and SREBF2/SREBP2 to the Golgi. Sterol deprivation or phosphorylation by PCK1 reduce oxysterol-binding, disrupting the interaction between INSIG2 and SCAP, thereby promoting Golgi transport of the SCAP-SREBP complex, followed by processing and nuclear translocation of SREBF1/SREBP1 and SREBF2/SREBP2. Also regulates cholesterol synthesis by regulating degradation of HMGCR: initiates the sterol-mediated ubiquitin-mediated endoplasmic reticulum-associated degradation (ERAD) of HMGCR via recruitment of the reductase to the ubiquitin ligase RNF139. This Homo sapiens (Human) protein is Insulin-induced gene 2 protein.